The sequence spans 308 residues: NAD kinase (308 aa).

Aspartate 86 functions as the Proton acceptor in the catalytic mechanism. NAD(+)-binding positions include 86–87 (DG), arginine 91, 160–161 (NE), aspartate 190, and 201–206 (TAYAFS).

It belongs to the NAD kinase family. A divalent metal cation is required as a cofactor.

It localises to the cytoplasm. It catalyses the reaction NAD(+) + ATP = ADP + NADP(+) + H(+). Involved in the regulation of the intracellular balance of NAD and NADP, and is a key enzyme in the biosynthesis of NADP. Catalyzes specifically the phosphorylation on 2'-hydroxyl of the adenosine moiety of NAD to yield NADP. The chain is NAD kinase from Mycolicibacterium paratuberculosis (strain ATCC BAA-968 / K-10) (Mycobacterium paratuberculosis).